Consider the following 222-residue polypeptide: Deoxyribose-phosphate aldolase (222 aa).

The Proton donor/acceptor role is filled by aspartate 92. Residue lysine 156 is the Schiff-base intermediate with acetaldehyde of the active site. The active-site Proton donor/acceptor is lysine 185.

This sequence belongs to the DeoC/FbaB aldolase family. DeoC type 1 subfamily. In terms of assembly, homodimer.

The protein resides in the cytoplasm. It catalyses the reaction 2-deoxy-D-ribose 5-phosphate = D-glyceraldehyde 3-phosphate + acetaldehyde. It participates in carbohydrate degradation; 2-deoxy-D-ribose 1-phosphate degradation; D-glyceraldehyde 3-phosphate and acetaldehyde from 2-deoxy-alpha-D-ribose 1-phosphate: step 2/2. With respect to regulation, shows high stability to high concentrations of acetaldehyde. Catalyzes a reversible aldol reaction between acetaldehyde and D-glyceraldehyde 3-phosphate to generate 2-deoxy-D-ribose 5-phosphate. This is Deoxyribose-phosphate aldolase from Aciduliprofundum boonei (strain DSM 19572 / T469).